The following is a 380-amino-acid chain: Dynactin subunit 2 (380 aa).

Residues 1-40 (MADPKFQNLPGIAYDQPDVYETPDDPETDTSDYYEEEPEN) are disordered. The segment covering 21 to 40 (ETPDDPETDTSDYYEEEPEN) has biased composition (acidic residues). Coiled-coil stretches lie at residues 100–135 (VQKC…QSYD) and 353–377 (ETFA…TAIS).

It belongs to the dynactin subunit 2 family. Subunit of dynactin, a multiprotein complex associated with dynein.

The protein resides in the cytoplasm. It localises to the cytoskeleton. It is found in the membrane. Modulates cytoplasmic dynein binding to an organelle, and plays a role in prometaphase chromosome alignment and spindle organization during mitosis. May play a role in synapse formation during brain development. This chain is Dynactin subunit 2, found in Drosophila pseudoobscura pseudoobscura (Fruit fly).